The primary structure comprises 94 residues: Pyrimidine/purine nucleoside phosphorylase (94 aa).

Belongs to the nucleoside phosphorylase PpnP family.

The enzyme catalyses a purine D-ribonucleoside + phosphate = a purine nucleobase + alpha-D-ribose 1-phosphate. It carries out the reaction adenosine + phosphate = alpha-D-ribose 1-phosphate + adenine. The catalysed reaction is cytidine + phosphate = cytosine + alpha-D-ribose 1-phosphate. It catalyses the reaction guanosine + phosphate = alpha-D-ribose 1-phosphate + guanine. The enzyme catalyses inosine + phosphate = alpha-D-ribose 1-phosphate + hypoxanthine. It carries out the reaction thymidine + phosphate = 2-deoxy-alpha-D-ribose 1-phosphate + thymine. The catalysed reaction is uridine + phosphate = alpha-D-ribose 1-phosphate + uracil. It catalyses the reaction xanthosine + phosphate = alpha-D-ribose 1-phosphate + xanthine. Its function is as follows. Catalyzes the phosphorolysis of diverse nucleosides, yielding D-ribose 1-phosphate and the respective free bases. Can use uridine, adenosine, guanosine, cytidine, thymidine, inosine and xanthosine as substrates. Also catalyzes the reverse reactions. In Pectobacterium carotovorum subsp. carotovorum (strain PC1), this protein is Pyrimidine/purine nucleoside phosphorylase.